Consider the following 216-residue polypeptide: CRIB domain-containing protein RIC7 (216 aa).

The CRIB domain maps to 36–49 (IGNPTDVKHVAHIG). The segment at 52 to 216 (GPSDNATAPS…PQFEDDRNGF (165 aa)) is disordered. The span at 108–121 (SSSEKGSPTKERSD) shows a compositional bias: basic and acidic residues.

Interacts with ARAC4/ROP2 and ARAC11/ROP1. As to expression, expressed in roots, leaves, guard cells, stems, flowers, siliques and pollen.

The protein resides in the nucleus. The protein localises to the cytoplasm. Its subcellular location is the cell membrane. Functionally, functions as a downstream effector of Rho-related GTP binding proteins of the 'Rho of Plants' (ROPs) family. Participates in the propagation of ROP GTPase signals in specific cellular responses. Functions as a downstream effector of active ARAC4/ROP2 GTPase which is involved in the prevention of excessive stomatal opening upon light stimulation. Is involved in pollen tube growth regulation through its interaction with ARAC11/ROP1. This chain is CRIB domain-containing protein RIC7 (RIC7), found in Arabidopsis thaliana (Mouse-ear cress).